The chain runs to 954 residues: Isoleucine--tRNA ligase (954 aa).

A 'HIGH' region motif is present at residues 58–68 (PYANGDIHIGH). Glutamate 572 provides a ligand contact to L-isoleucyl-5'-AMP. Positions 613-617 (KMSKS) match the 'KMSKS' region motif. Residue lysine 616 participates in ATP binding. 4 residues coordinate Zn(2+): cysteine 917, cysteine 920, cysteine 937, and cysteine 940.

Belongs to the class-I aminoacyl-tRNA synthetase family. IleS type 1 subfamily. Monomer. Requires Zn(2+) as cofactor.

It is found in the cytoplasm. The catalysed reaction is tRNA(Ile) + L-isoleucine + ATP = L-isoleucyl-tRNA(Ile) + AMP + diphosphate. In terms of biological role, catalyzes the attachment of isoleucine to tRNA(Ile). As IleRS can inadvertently accommodate and process structurally similar amino acids such as valine, to avoid such errors it has two additional distinct tRNA(Ile)-dependent editing activities. One activity is designated as 'pretransfer' editing and involves the hydrolysis of activated Val-AMP. The other activity is designated 'posttransfer' editing and involves deacylation of mischarged Val-tRNA(Ile). This is Isoleucine--tRNA ligase from Photobacterium profundum (strain SS9).